We begin with the raw amino-acid sequence, 964 residues long: Phosphoenolpyruvate carboxylase (964 aa).

At Ser11 the chain carries Phosphoserine. Residues His172 and Lys600 contribute to the active site.

It belongs to the PEPCase type 1 family. In terms of assembly, homotetramer. It depends on Mg(2+) as a cofactor.

It localises to the cytoplasm. The enzyme catalyses oxaloacetate + phosphate = phosphoenolpyruvate + hydrogencarbonate. The protein operates within photosynthesis; C4 acid pathway. Its activity is regulated as follows. By light-reversible phosphorylation. Its function is as follows. Through the carboxylation of phosphoenolpyruvate (PEP) it forms oxaloacetate, a four-carbon dicarboxylic acid source for the tricarboxylic acid cycle. The chain is Phosphoenolpyruvate carboxylase from Amaranthus hypochondriacus (Prince-of-Wales feather).